The chain runs to 362 residues: E3 ubiquitin-protein ligase TM129 (362 aa).

At 1–6 (MESPAV) the chain is on the lumenal side. Residues 7–27 (TFTLAYVVFSVCFVFTPNEFH) traverse the membrane as a helical segment. The Cytoplasmic portion of the chain corresponds to 28–56 (SAGITVQNLLSGWLGSEDVAFVHYHIRRS). The chain crosses the membrane as a helical span at residues 57 to 77 (SATLLAHSLLPMGYFIGMCFA). Residues 78 to 94 (APEKELYNVHKAADGWK) lie on the Lumenal side of the membrane. The helical transmembrane segment at 95 to 115 (VFVLMAVLLPIATSILAFYWS) threads the bilayer. Residues 116–362 (QKRWSNHPLA…FCIVDVCIVR (247 aa)) are Cytoplasmic-facing. The RING-type; degenerate zinc-finger motif lies at 285–350 (CIGCMQTNAN…SSQVPCPTCR (66 aa)).

Belongs to the TMEM129 family. As to quaternary structure, integral component of ER-resident dislocation complexes.

Its subcellular location is the endoplasmic reticulum membrane. It catalyses the reaction S-ubiquitinyl-[E2 ubiquitin-conjugating enzyme]-L-cysteine + [acceptor protein]-L-lysine = [E2 ubiquitin-conjugating enzyme]-L-cysteine + N(6)-ubiquitinyl-[acceptor protein]-L-lysine.. The protein operates within protein modification; protein ubiquitination. Functionally, E3 ubiquitin-protein ligase involved in ER-associated protein degradation, preferentially associates with the E2 enzyme UBE2J2. This Xenopus laevis (African clawed frog) protein is E3 ubiquitin-protein ligase TM129 (tmem129).